The following is a 190-amino-acid chain: A-type ATP synthase subunit E (190 aa).

This sequence belongs to the V-ATPase E subunit family. In terms of assembly, has multiple subunits with at least A(3), B(3), C, D, E, F, H, I and proteolipid K(x).

Its subcellular location is the cell membrane. Component of the A-type ATP synthase that produces ATP from ADP in the presence of a proton gradient across the membrane. The protein is A-type ATP synthase subunit E of Pyrobaculum neutrophilum (strain DSM 2338 / JCM 9278 / NBRC 100436 / V24Sta) (Thermoproteus neutrophilus).